Here is a 1224-residue protein sequence, read N- to C-terminus: Probable serine/threonine-protein kinase DDB_G0292350 (1224 aa).

Disordered regions lie at residues 57–98 and 252–284; these read MSGS…STQR and SSPSSSSSSIKTKNTTSTTTTTTTTKNLNDISN. 2 stretches are compositionally biased toward low complexity: residues 58–74 and 83–95; these read SGSIQSDLSSSDNFTSS and SSSNTSNRNSDNS. 2 coiled-coil regions span residues 352–381 and 540–569; these read LFKQQEKQHQQQQQQQQNQQDKEKFEKQNN and DVQLSTKLNDEEETIEKEEEDLNSVDEYLT. Disordered stretches follow at residues 693-784 and 815-836; these read QPIP…FVIT and FTNNNNNNNGGSTITTTTTNNI. Residues 743–768 show a composition bias toward low complexity; it reads NNNNNNNNNINNNNINNNNINNNKNG. Over residues 772–784 the composition is skewed to polar residues; the sequence is GETPSPSSSFVIT. The 259-residue stretch at 935–1193 folds into the Protein kinase domain; the sequence is FRDKIKLGTG…PEMLLHHTFL (259 aa). Residues 941-949 and Lys-964 each bind ATP; that span reads LGTGAFGNV. Catalysis depends on Asp-1063, which acts as the Proton acceptor.

The protein belongs to the protein kinase superfamily. Ser/Thr protein kinase family. Requires Mg(2+) as cofactor.

It catalyses the reaction L-seryl-[protein] + ATP = O-phospho-L-seryl-[protein] + ADP + H(+). The enzyme catalyses L-threonyl-[protein] + ATP = O-phospho-L-threonyl-[protein] + ADP + H(+). This chain is Probable serine/threonine-protein kinase DDB_G0292350, found in Dictyostelium discoideum (Social amoeba).